Here is a 393-residue protein sequence, read N- to C-terminus: Homeobox protein knotted-1-like 4 (393 aa).

Residues 1 to 13 (MAFHNNHFNHFTD) are compositionally biased toward polar residues. 2 disordered regions span residues 1–39 (MAFHNNHFNHFTDQQQHQPPPPPQQQQQQHFQESAPPNW) and 81–114 (QRGNTANNNNNETSGDVIEDVPGGEESMIGEKKE). The 21-residue stretch at 286–306 (ELKHELKQGYKEKIVDIREEI) folds into the ELK domain. The homeobox; TALE-type DNA-binding region spans 307–370 (LRKRRAGKLP…NQRKRNWHSN (64 aa)). The interval 363-393 (RKRNWHSNPSSSTVSKNKRRSNAGENSGRDR) is disordered. A compositionally biased stretch (polar residues) spans 368–377 (HSNPSSSTVS).

It belongs to the TALE/KNOX homeobox family. In terms of assembly, may form heterodimeric complex with the TALE/BELL proteins. Interacts with OFP1, OFP2, OFP4 and OFP12. Interacts with KNATM-B.

The protein resides in the nucleus. This is Homeobox protein knotted-1-like 4 (KNAT4) from Arabidopsis thaliana (Mouse-ear cress).